Consider the following 873-residue polypeptide: Leucine--tRNA ligase (873 aa).

Positions 42–52 (PYPSGKLHMGH) match the 'HIGH' region motif. The short motif at 628–632 (KMAKS) is the 'KMSKS' region element. Lysine 631 provides a ligand contact to ATP.

This sequence belongs to the class-I aminoacyl-tRNA synthetase family.

Its subcellular location is the cytoplasm. The enzyme catalyses tRNA(Leu) + L-leucine + ATP = L-leucyl-tRNA(Leu) + AMP + diphosphate. This is Leucine--tRNA ligase from Aromatoleum aromaticum (strain DSM 19018 / LMG 30748 / EbN1) (Azoarcus sp. (strain EbN1)).